Here is a 356-residue protein sequence, read N- to C-terminus: 4-hydroxy-3-methylbut-2-en-1-yl diphosphate synthase (flavodoxin) (356 aa).

Cysteine 262, cysteine 265, cysteine 297, and glutamate 304 together coordinate [4Fe-4S] cluster.

Belongs to the IspG family. [4Fe-4S] cluster is required as a cofactor.

The enzyme catalyses (2E)-4-hydroxy-3-methylbut-2-enyl diphosphate + oxidized [flavodoxin] + H2O + 2 H(+) = 2-C-methyl-D-erythritol 2,4-cyclic diphosphate + reduced [flavodoxin]. It participates in isoprenoid biosynthesis; isopentenyl diphosphate biosynthesis via DXP pathway; isopentenyl diphosphate from 1-deoxy-D-xylulose 5-phosphate: step 5/6. Its function is as follows. Converts 2C-methyl-D-erythritol 2,4-cyclodiphosphate (ME-2,4cPP) into 1-hydroxy-2-methyl-2-(E)-butenyl 4-diphosphate. This is 4-hydroxy-3-methylbut-2-en-1-yl diphosphate synthase (flavodoxin) from Campylobacter fetus subsp. fetus (strain 82-40).